Here is a 74-residue protein sequence, read N- to C-terminus: Conotoxin VnMEKL-0222 (74 aa).

Residues 1–19 (MEKLTILLLVAAVLMSTQA) form the signal peptide. A propeptide spanning residues 20-46 (LIQEKRPKEKIKFLSKRKSIPESWWEG) is cleaved from the precursor. Intrachain disulfides connect C48/C62, C55/C66, and C61/C71.

Belongs to the conotoxin O2 superfamily. In terms of tissue distribution, expressed by the venom duct.

It localises to the secreted. This chain is Conotoxin VnMEKL-0222, found in Conus ventricosus (Mediterranean cone).